The primary structure comprises 1005 residues: Sorbin and SH3 domain-containing protein 1 homolog (1005 aa).

7 disordered regions span residues 1–31, 61–86, 99–153, 243–292, 386–409, 427–475, and 542–622; these read MMHHPHPFGSNLANSSEPQQPSGQYLNPAAD, LDMKTPTGNSSRYQKPAPPPVDSTPS, YVDP…PHSA, NELK…FNSE, FEEKQNRSPMTSTPSYKEQGFKND, TTKN…TAAA, and MHRK…SNEE. The span at 11–25 shows a compositional bias: polar residues; sequence NLANSSEPQQPSGQY. A compositionally biased stretch (polar residues) spans 260-269; sequence VMTSSTENLK. Low complexity predominate over residues 270–279; that stretch reads NGNNQQNQQP. Residues 392–409 show a composition bias toward polar residues; the sequence is RSPMTSTPSYKEQGFKND. The span at 448 to 475 shows a compositional bias: low complexity; that stretch reads SDTYPVSSSTTSTWPSHTTTPTTTTAAA. One can recognise a SoHo domain in the interval 499–567; it reads VMSTNMDEPI…FINPSNVTDG (69 aa). Residues 544–557 show a composition bias toward basic and acidic residues; that stretch reads RKGEDGSNEGKEQH. Residues 559-589 are compositionally biased toward polar residues; that stretch reads INPSNVTDGIGRTTPTASNLGRSRENLSFNQ. Positions 610-642 form a coiled coil; the sequence is YNNQERVKQSNEEELLRLKAEKLAEELRKEKER. SH3 domains lie at 683–742, 745–805, and 946–1005; these read QPVM…INTG, GDSQ…PIEQ, and KGSE…VKRH.

In terms of assembly, may interact with deb-1. Expressed in body wall muscles, muscle arm attachment sites at the nerve ring, all non-striated muscles, and distal tip cells of the gonad. Highly expressed in the origins and insertions of the vulval and anal depressor muscles and the spicule-associated and diagonal muscles of the male tail. Expressed in small puncta throughout the uterus, stomatointestinal muscle and proximal gonadal sheath tissues. Not expressed in the pharynx.

The protein localises to the cell junction. It localises to the adherens junction. Its subcellular location is the cell membrane. It is found in the focal adhesion. Required for organization of sarcomeres in body wall muscles and for maintaining normal mitochondrial position in myocytes. This Caenorhabditis elegans protein is Sorbin and SH3 domain-containing protein 1 homolog.